Consider the following 547-residue polypeptide: Eukaryotic translation initiation factor 3 subunit D (547 aa).

Disordered regions lie at residues 1-22 (MANF…PSTS) and 114-159 (SVRG…TRDS). A compositionally biased stretch (gly residues) spans 126 to 148 (GRGGQRGGFSTRGGRGGARGGYG). The segment at 284-298 (PLDYITVNENAADPP) is RNA gate.

The protein belongs to the eIF-3 subunit D family. Component of the eukaryotic translation initiation factor 3 (eIF-3) complex.

It localises to the cytoplasm. In terms of biological role, mRNA cap-binding component of the eukaryotic translation initiation factor 3 (eIF-3) complex, which is involved in protein synthesis of a specialized repertoire of mRNAs and, together with other initiation factors, stimulates binding of mRNA and methionyl-tRNAi to the 40S ribosome. The eIF-3 complex specifically targets and initiates translation of a subset of mRNAs involved in cell proliferation. In the eIF-3 complex, eif3d specifically recognizes and binds the 7-methylguanosine cap of a subset of mRNAs. This chain is Eukaryotic translation initiation factor 3 subunit D, found in Cryptococcus neoformans var. neoformans serotype D (strain B-3501A) (Filobasidiella neoformans).